A 620-amino-acid polypeptide reads, in one-letter code: Cryptochrome-1 (620 aa).

One can recognise a Photolyase/cryptochrome alpha/beta domain in the interval 3-132; the sequence is VNAVHWFRKG…EVIVRISHTL (130 aa). 3 consecutive short sequence motifs (LIR) follow at residues 50-54, 82-87, and 151-156; these read NRWRF, DVFPRL, and KRFQTL. S252 provides a ligand contact to FAD. 4 short sequence motifs (LIR) span residues 255 to 260, 271 to 276, 285 to 290, and 335 to 339; these read LRFGCL, DLYKKV, SLYGQL, and TGFPW. Q289 contacts FAD. Residue H355 coordinates FAD. The LIR 8 signature appears at 379–384; that stretch reads KVFEEL. 387 to 389 provides a ligand contact to FAD; the sequence is DAD. 5 consecutive short sequence motifs (LIR) follow at residues 395-400, 411-416, 430-435, 486-491, and 492-497; these read GSWMWL, HCYCPV, RRYLPV, QIYQQL, and SRYRGL. The interval 593 to 620 is disordered; sequence TGISAGKRPNPEEETQSVGPKVQRQSTN.

It belongs to the DNA photolyase class-1 family. As to quaternary structure, component of the circadian core oscillator, which includes the CRY proteins, CLOCK or NPAS2, BMAL1 or BMAL2, CSNK1E, and the PER proteins. FAD is required as a cofactor. (6R)-5,10-methylene-5,6,7,8-tetrahydrofolate serves as cofactor. In terms of tissue distribution, expressed in the retina.

Its subcellular location is the cytoplasm. It localises to the nucleus. Transcriptional repressor which forms a core component of the circadian clock. The circadian clock, an internal time-keeping system, regulates various physiological processes through the generation of approximately 24 hour circadian rhythms in gene expression, which are translated into rhythms in metabolism and behavior. It is derived from the Latin roots 'circa' (about) and 'diem' (day) and acts as an important regulator of a wide array of physiological functions including metabolism, sleep, body temperature, blood pressure, endocrine, immune, cardiovascular, and renal function. Consists of two major components: the central clock, residing in the suprachiasmatic nucleus (SCN) of the brain, and the peripheral clocks that are present in nearly every tissue and organ system. Both the central and peripheral clocks can be reset by environmental cues, also known as Zeitgebers (German for 'timegivers'). The predominant Zeitgeber for the central clock is light, which is sensed by retina and signals directly to the SCN. The central clock entrains the peripheral clocks through neuronal and hormonal signals, body temperature and feeding-related cues, aligning all clocks with the external light/dark cycle. Circadian rhythms allow an organism to achieve temporal homeostasis with its environment at the molecular level by regulating gene expression to create a peak of protein expression once every 24 hours to control when a particular physiological process is most active with respect to the solar day. Transcription and translation of core clock components (CLOCK, NPAS2, BMAL1, BMAL2, PER1, PER2, PER3, CRY1 and CRY2) plays a critical role in rhythm generation, whereas delays imposed by post-translational modifications (PTMs) are important for determining the period (tau) of the rhythms (tau refers to the period of a rhythm and is the length, in time, of one complete cycle). A diurnal rhythm is synchronized with the day/night cycle, while the ultradian and infradian rhythms have a period shorter and longer than 24 hours, respectively. Disruptions in the circadian rhythms contribute to the pathology of cardiovascular diseases, cancer, metabolic syndromes and aging. A transcription/translation feedback loop (TTFL) forms the core of the molecular circadian clock mechanism. Transcription factors, CLOCK or NPAS2 and BMAL1 or BMAL2, form the positive limb of the feedback loop, act in the form of a heterodimer and activate the transcription of core clock genes and clock-controlled genes (involved in key metabolic processes), harboring E-box elements (5'-CACGTG-3') within their promoters. The core clock genes: PER1/2/3 and CRY1/2 which are transcriptional repressors form the negative limb of the feedback loop and interact with the CLOCK|NPAS2-BMAL1|BMAL2 heterodimer inhibiting its activity and thereby negatively regulating their own expression. This heterodimer also activates nuclear receptors NR1D1/2 and RORA/B/G, which form a second feedback loop and which activate and repress BMAL1 transcription, respectively. CRY1 and CRY2 have redundant functions but also differential and selective contributions at least in defining the pace of the SCN circadian clock and its circadian transcriptional outputs. More potent transcriptional repressor in cerebellum and liver than CRY2, though more effective in lengthening the period of the SCN oscillator. On its side, CRY2 seems to play a critical role in tuning SCN circadian period by opposing the action of CRY1. With CRY2, is dispensable for circadian rhythm generation but necessary for the development of intercellular networks for rhythm synchrony. Capable of translocating circadian clock core proteins such as PER proteins to the nucleus. Interacts with CLOCK-BMAL1 independently of PER proteins and is found at CLOCK-BMAL1-bound sites, suggesting that CRY may act as a molecular gatekeeper to maintain CLOCK-BMAL1 in a poised and repressed state until the proper time for transcriptional activation. This Erithacus rubecula (European robin) protein is Cryptochrome-1 (CRY1).